We begin with the raw amino-acid sequence, 507 residues long: MSPNAPAVDIGAAPSLDTPEGDTKQPAEDHVEKDSNLVDWDGPDDPEHPQNLTRLRKWGITFSLASMTMWITFSSSVLSVATHPISEEYNVSTKVMPLATTLVIFGFALGPLCWAPLSELYGRRLPTFLGYGVFAIFQVPVAVAPNLQTIMVCRFFVGVFGSSALSVGPGVMADIWDPVDRGIATPFFFAANLLGPILGPIIGGFITESQLGWRWTAWLTLITSIFFGVLALLIVPETYSPVLLQQRASRLRRATQNQSLYSFLDQHRPTLAEFGYKYLARPFMMFLLEPILICFTVYLSLIYGILYLFLEAYPVAFAEERHWTNKGIAGLPFLGILVGMVLGIGIIIYNTRTRFARHLAEQGQVAPEERLVEMMLTSITMPIGLFWFGWAAHTHWMVQTIAGVPLGIGLFVLFMQGMNYLIDVYLTLSNSAIAANTLARSFLGGSFPLFATAMYHNLGVDWASTILGFISVAMVPIPFAFYIFGARIRAMSRYTVKAGNGIGPPIP.

Residues 1–50 (MSPNAPAVDIGAAPSLDTPEGDTKQPAEDHVEKDSNLVDWDGPDDPEHPQ) form a disordered region. The span at 21-36 (GDTKQPAEDHVEKDSN) shows a compositional bias: basic and acidic residues. A glycan (N-linked (GlcNAc...) asparagine) is linked at Asn51. The chain crosses the membrane as a helical span at residues 58–78 (WGITFSLASMTMWITFSSSVL). Asn90 carries N-linked (GlcNAc...) asparagine glycosylation. 5 helical membrane passes run 95 to 115 (VMPL…LCWA), 125 to 145 (LPTF…AVAP), 155 to 175 (FFVG…MADI), 186 to 206 (PFFF…GGFI), and 215 to 235 (WTAW…LLIV). The N-linked (GlcNAc...) asparagine glycan is linked to Asn257. Helical transmembrane passes span 290-310 (PILI…YLFL), 328-348 (IAGL…GIII), 371-391 (LVEM…FGWA), 395-415 (HWMV…VLFM), 442-462 (FLGG…GVDW), and 466-486 (ILGF…IFGA).

Belongs to the major facilitator superfamily. CAR1 family.

The protein resides in the membrane. In terms of biological role, MFS-type transporter; part of the gene cluster that mediates the biosynthesis of aspcandine, a pyrrolobenzazepine alkaloid. The protein is MFS-type transporter acdC of Aspergillus candidus.